Here is a 351-residue protein sequence, read N- to C-terminus: Maleylacetate reductase (351 aa).

Belongs to the iron-containing alcohol dehydrogenase family. As to quaternary structure, homodimer.

It carries out the reaction 3-oxoadipate + NAD(+) = maleylacetate + NADH + H(+). The protein operates within aromatic compound metabolism. Its function is as follows. Involved in the gamma-resorcylate (2,6-dihydroxybenzoate) catabolism. Catalyzes the reduction of maleylacetate to 3-oxoadipate. This chain is Maleylacetate reductase, found in Rhizobium sp. (strain MTP-10005).